The sequence spans 188 residues: 3-deoxy-D-manno-octulosonate 8-phosphate phosphatase KdsC (188 aa).

Residues Asp32 and Asp34 each coordinate Mg(2+). Residues Asp34, 55 to 59 (NVRDG), Arg63, Arg78, Arg86, and Lys102 each bind substrate. Asp125 lines the Mg(2+) pocket.

Belongs to the KdsC family. As to quaternary structure, homotetramer. It depends on Mg(2+) as a cofactor.

The catalysed reaction is 3-deoxy-alpha-D-manno-2-octulosonate-8-phosphate + H2O = 3-deoxy-alpha-D-manno-oct-2-ulosonate + phosphate. The protein operates within carbohydrate biosynthesis; 3-deoxy-D-manno-octulosonate biosynthesis; 3-deoxy-D-manno-octulosonate from D-ribulose 5-phosphate: step 3/3. It functions in the pathway bacterial outer membrane biogenesis; lipopolysaccharide biosynthesis. Functionally, catalyzes the hydrolysis of 3-deoxy-D-manno-octulosonate 8-phosphate (KDO 8-P) to 3-deoxy-D-manno-octulosonate (KDO) and inorganic phosphate. This Escherichia coli (strain K12) protein is 3-deoxy-D-manno-octulosonate 8-phosphate phosphatase KdsC.